The sequence spans 376 residues: Heat-inducible transcription repressor HrcA (376 aa).

The protein belongs to the HrcA family.

In terms of biological role, negative regulator of class I heat shock genes (grpE-dnaK-dnaJ and groELS operons). Prevents heat-shock induction of these operons. This Nostoc punctiforme (strain ATCC 29133 / PCC 73102) protein is Heat-inducible transcription repressor HrcA.